The chain runs to 71 residues: Sodium channel neurotoxin MeuNaTxalpha-12 (71 aa).

Positions 1–6 (MTGVES) are cleaved as a signal peptide. Residues 8–70 (RDAYIAQGNN…VPIRIQGKCQ (63 aa)) form the LCN-type CS-alpha/beta domain. Intrachain disulfides connect cysteine 18–cysteine 69, cysteine 22–cysteine 42, cysteine 28–cysteine 52, and cysteine 32–cysteine 54. A propeptide (removed by a carboxypeptidase) is located at residue arginine 71.

It belongs to the long (4 C-C) scorpion toxin superfamily. Sodium channel inhibitor family. Alpha subfamily. As to expression, expressed by the venom gland.

It localises to the secreted. Its function is as follows. Alpha toxins bind voltage-independently at site-3 of sodium channels (Nav) and inhibit the inactivation of the activated channels, thereby blocking neuronal transmission. The sequence is that of Sodium channel neurotoxin MeuNaTxalpha-12 from Mesobuthus eupeus (Lesser Asian scorpion).